The sequence spans 317 residues: MITRLKNWPRLLKTPLQIARHSIQQFSHLAGHYERPPQSGKSSRDPYLVTVVQGRSKKPRFPGERANQRFGEDSWFVRSTPLAEVMGVADGVGGWRDVGVDAGRFAKELMTCCSGQTQRSGFDGRSPRNLLIASFQELTHREHPVVGSSTACLATMHRKDCTLYTANLGDSGFLVVRNGRVLHRSVEQTHDFNTPYQLTVPPEDRKECYYCDKPEMAVSTRHSLLPGDLVLLATDGLFDNMPESMLLKILNGLKERGERDLLQCASQVVEKARELSLNATFQSPFAIKARQHNVSYSGGGKPDDITLILASVEVQSA.

The PPM-type phosphatase domain maps to 46–312 (PYLVTVVQGR…DDITLILASV (267 aa)). Positions 90, 91, and 235 each coordinate Mn(2+).

The protein belongs to the PP2C family. Mg(2+) is required as a cofactor. The cofactor is Mn(2+).

It carries out the reaction O-phospho-L-seryl-[protein] + H2O = L-seryl-[protein] + phosphate. It catalyses the reaction O-phospho-L-threonyl-[protein] + H2O = L-threonyl-[protein] + phosphate. The polypeptide is Protein phosphatase PTC7 homolog fig (Drosophila erecta (Fruit fly)).